The chain runs to 163 residues: NADH-quinone oxidoreductase subunit I (163 aa).

4Fe-4S ferredoxin-type domains are found at residues 55 to 84 and 94 to 123; these read RRYPSGEERCIACKLCEAICPAQAITIDAE and TRYDIDMTKCIYCGYCQEACPVDAIVEGPN. [4Fe-4S] cluster-binding residues include Cys-64, Cys-67, Cys-70, Cys-74, Cys-103, Cys-106, Cys-109, and Cys-113.

It belongs to the complex I 23 kDa subunit family. As to quaternary structure, NDH-1 is composed of 14 different subunits. Subunits NuoA, H, J, K, L, M, N constitute the membrane sector of the complex. It depends on [4Fe-4S] cluster as a cofactor.

It is found in the cell inner membrane. It catalyses the reaction a quinone + NADH + 5 H(+)(in) = a quinol + NAD(+) + 4 H(+)(out). Its function is as follows. NDH-1 shuttles electrons from NADH, via FMN and iron-sulfur (Fe-S) centers, to quinones in the respiratory chain. The immediate electron acceptor for the enzyme in this species is believed to be ubiquinone. Couples the redox reaction to proton translocation (for every two electrons transferred, four hydrogen ions are translocated across the cytoplasmic membrane), and thus conserves the redox energy in a proton gradient. The polypeptide is NADH-quinone oxidoreductase subunit I (nuoI) (Rhodobacter capsulatus (Rhodopseudomonas capsulata)).